A 273-amino-acid polypeptide reads, in one-letter code: Large ribosomal subunit protein uL2 (273 aa).

Residues 221 to 273 (RGTAMNPVDHPHGGGEGRNFGKHPVSPWGVQTKGKKTRHNKRTDKYIVRRRGK) form a disordered region. Positions 253 to 273 (KGKKTRHNKRTDKYIVRRRGK) are enriched in basic residues.

Belongs to the universal ribosomal protein uL2 family. As to quaternary structure, part of the 50S ribosomal subunit. Forms a bridge to the 30S subunit in the 70S ribosome.

Functionally, one of the primary rRNA binding proteins. Required for association of the 30S and 50S subunits to form the 70S ribosome, for tRNA binding and peptide bond formation. It has been suggested to have peptidyltransferase activity; this is somewhat controversial. Makes several contacts with the 16S rRNA in the 70S ribosome. In Mannheimia succiniciproducens (strain KCTC 0769BP / MBEL55E), this protein is Large ribosomal subunit protein uL2.